We begin with the raw amino-acid sequence, 336 residues long: Aldehyde reductase AdhA (336 aa).

Zn(2+) contacts are provided by Cys-36, Cys-39, His-61, Cys-92, Cys-95, Cys-98, Cys-106, and Cys-148.

The protein belongs to the zinc-containing alcohol dehydrogenase family. As to quaternary structure, homotetramer. Requires Zn(2+) as cofactor.

It localises to the cytoplasm. It carries out the reaction a primary alcohol + NADP(+) = an aldehyde + NADPH + H(+). Active on a wide variety of primary alcohols and their corresponding aldehydes, but not against ketones nor secondary alcohols. Active on aliphatic compounds up to 5 carbons in length and aromatic alcohols, less effective on branched-chain primary alcohols. Prefers NADPH to NADH. Its catalytic efficiency is greatest for aldehydes, suggesting the reduction of aromatic and medium-chain aliphatic aldehydes is its in vivo activity. Plays a role in tolerance to internally produced ethanol. The chain is Aldehyde reductase AdhA from Synechocystis sp. (strain ATCC 27184 / PCC 6803 / Kazusa).